The chain runs to 142 residues: Small ribosomal subunit protein uS12 (142 aa).

A disordered region spans residues 1–22; it reads MPTFNQLVRKGRKAAKKKSTAP. A compositionally biased stretch (basic residues) spans 9–19; sequence RKGRKAAKKKS. Asp102 carries the 3-methylthioaspartic acid modification.

The protein belongs to the universal ribosomal protein uS12 family. In terms of assembly, part of the 30S ribosomal subunit. Contacts proteins S8 and S17. May interact with IF1 in the 30S initiation complex.

In terms of biological role, with S4 and S5 plays an important role in translational accuracy. Its function is as follows. Interacts with and stabilizes bases of the 16S rRNA that are involved in tRNA selection in the A site and with the mRNA backbone. Located at the interface of the 30S and 50S subunits, it traverses the body of the 30S subunit contacting proteins on the other side and probably holding the rRNA structure together. The combined cluster of proteins S8, S12 and S17 appears to hold together the shoulder and platform of the 30S subunit. In Acetivibrio thermocellus (strain ATCC 27405 / DSM 1237 / JCM 9322 / NBRC 103400 / NCIMB 10682 / NRRL B-4536 / VPI 7372) (Clostridium thermocellum), this protein is Small ribosomal subunit protein uS12.